The sequence spans 61 residues: Truncated Cytokine response-modifying protein B (61 aa).

Its function is as follows. The protein is truncated in this strain and presumably inactive. It has similarities with variola virus CrmB, but the product is inactivated due to several premature stop codon. The sequence is that of Truncated Cytokine response-modifying protein B from Bos taurus (Bovine).